A 326-amino-acid polypeptide reads, in one-letter code: Probable protein phosphatase 2C 61 (326 aa).

A PPM-type phosphatase domain is found at 42 to 316 (LGSVSSLAGG…DDISVVCLSL (275 aa)). Positions 77, 78, 261, and 307 each coordinate Mn(2+).

The protein belongs to the PP2C family. The cofactor is Mg(2+). It depends on Mn(2+) as a cofactor.

The catalysed reaction is O-phospho-L-seryl-[protein] + H2O = L-seryl-[protein] + phosphate. It catalyses the reaction O-phospho-L-threonyl-[protein] + H2O = L-threonyl-[protein] + phosphate. The protein is Probable protein phosphatase 2C 61 of Arabidopsis thaliana (Mouse-ear cress).